The sequence spans 202 residues: Superoxide dismutase [Mn], mitochondrial (202 aa).

The N-terminal 5 residues, 1-5 (HGRGM), are a transit peptide targeting the mitochondrion. Histidine 31 is a Mn(2+) binding site. 3'-nitrotyrosine is present on tyrosine 39. The residue at position 49 (lysine 49) is an N6-acetyllysine; alternate. Residue lysine 49 is modified to N6-succinyllysine; alternate. Histidine 79 is a Mn(2+) binding site. Lysine 95 bears the N6-acetyllysine mark. Residues lysine 103 and lysine 111 each carry the N6-acetyllysine; alternate modification. Residues lysine 103 and lysine 111 each carry the N6-succinyllysine; alternate modification. Positions 164 and 168 each coordinate Mn(2+). Lysine 183 is subject to N6-acetyllysine.

Belongs to the iron/manganese superoxide dismutase family. In terms of assembly, homotetramer. Mn(2+) is required as a cofactor. Nitrated under oxidative stress. Nitration coupled with oxidation inhibits the catalytic activity. In terms of processing, acetylation at Lys-122 decreases enzymatic activity. Deacetylated by SIRT3 upon exposure to ionizing radiations or after long fasting. Post-translationally, polyubiquitinated; leading to proteasomal degradation. Deubiquitinated by USP36 which increases protein stability.

The protein localises to the mitochondrion matrix. The catalysed reaction is 2 superoxide + 2 H(+) = H2O2 + O2. Its function is as follows. Destroys superoxide anion radicals which are normally produced within the cells and which are toxic to biological systems. This chain is Superoxide dismutase [Mn], mitochondrial (SOD2), found in Oryctolagus cuniculus (Rabbit).